A 122-amino-acid polypeptide reads, in one-letter code: Large ribosomal subunit protein uL14 (122 aa).

It belongs to the universal ribosomal protein uL14 family. In terms of assembly, part of the 50S ribosomal subunit. Forms a cluster with proteins L3 and L19. In the 70S ribosome, L14 and L19 interact and together make contacts with the 16S rRNA in bridges B5 and B8.

In terms of biological role, binds to 23S rRNA. Forms part of two intersubunit bridges in the 70S ribosome. The protein is Large ribosomal subunit protein uL14 of Clostridioides difficile (strain 630) (Peptoclostridium difficile).